The sequence spans 3333 residues: MAAAARPRGRALGPVLPPTPLLLLVLRVLPACGATARDPGAAAGLSLHPTYFNLAEAARIWATATCGERGPGEGRPQPELYCKLVGGPTAPGSGHTIQGQFCDYCNSEDPRKAHPVTNAIDGSERWWQSPPLSSGTQYNRVNLTLDLGQLFHVAYILIKFANSPRPDLWVLERSVDFGSTYSPWQYFAHSKVDCLKEFGREANMAVTRDDDVLCVTEYSRIVPLENGEVVVSLINGRPGAKNFTFSHTLREFTKATNIRLRFLRTNTLLGHLISKAQRDPTVTRRYYYSIKDISIGGQCVCNGHAEVCNINNPEKLFRCECQHHTCGETCDRCCTGYNQRRWRPAAWEQSHECEACNCHGHASNCYYDPDVERQQASLNTQGIYAGGGVCINCQHNTAGVNCEQCAKGYYRPYGVPVDAPDGCIPCSCDPEHADGCEQGSGRCHCKPNFHGDNCEKCAIGYYNFPFCLRIPIFPVSTPSSEDPVAGDIKGCDCNLEGVLPEICDAHGRCLCRPGVEGPRCDTCRSGFYSFPICQACWCSALGSYQMPCSSVTGQCECRPGVTGQRCDRCLSGAYDFPHCQGSSSACDPAGTINSNLGYCQCKLHVEGPTCSRCKLLYWNLDKENPSGCSECKCHKAGTVSGTGECRQGDGDCHCKSHVGGDSCDTCEDGYFALEKSNYFGCQGCQCDIGGALSSMCSGPSGVCQCREHVVGKVCQRPENNYYFPDLHHMKYEIEDGSTPNGRDLRFGFDPLAFPEFSWRGYAQMTSVQNDVRITLNVGKSSGSLFRVILRYVNPGTEAVSGHITIYPSWGAAQSKEIIFLPSKEPAFVTVPGNGFADPFSITPGIWVACIKAEGVLLDYLVLLPRDYYEASVLQLPVTEPCAYAGPPQENCLLYQHLPVTRFPCTLACEARHFLLDGEPRPVAVRQPTPAHPVMVDLSGREVELHLRLRIPQVGHYVVVVEYSTEAAQLFVVDVNVKSSGSVLAGQVNIYSCNYSVLCRSAVIDHMSRIAMYELLADADIQLKGHMARFLLHQVCIIPIEEFSAEYVRPQVHCIASYGRFVNQSATCVSLAHETPPTALILDVLSGRPFPHLPQQSSPSVDVLPGVTLKAPQNQVTLRGRVPHLGRYVFVIHFYQAAHPTFPAQVSVDGGWPRAGSFHASFCPHVLGCRDQVIAEGQIEFDISEPEVAATVKVPEGKSLVLVRVLVVPAENYDYQILHKKSMDKSLEFITNCGKNSFYLDPQTASRFCKNSARSLVAFYHKGALPCECHPTGATGPHCSPEGGQCPCQPNVIGRQCTRCATGHYGFPRCKPCSCGRRLCEEMTGQCRCPPRTVRPQCEVCETHSFSFHPMAGCEGCNCSRRGTIEAAMPECDRDSGQCRCKPRITGRQCDRCASGFYRFPECVPCNCNRDGTEPGVCDPGTGACLCKENVEGTECNVCREGSFHLDPANLKGCTSCFCFGVNNQCHSSHKRRTKFVDMLGWHLETADRVDIPVSFNPGSNSMVADLQELPATIHSASWVAPTSYLGDKVSSYGGYLTYQAKSFGLPGDMVLLEKKPDVQLTGQHMSIIYEETNTPRPDRLHHGRVHVVEGNFRHASSRAPVSREELMTVLSRLADVRIQGLYFTETQRLTLSEVGLEEASDTGSGRIALAVEICACPPAYAGDSCQGCSPGYYRDHKGLYTGRCVPCNCNGHSNQCQDGSGICVNCQHNTAGEHCERCQEGYYGNAVHGSCRACPCPHTNSFATGCVVNGGDVRCSCKAGYTGTQCERCAPGYFGNPQKFGGSCQPCSCNSNGQLGSCHPLTGDCINQEPKDSSPAEECDDCDSCVMTLLNDLATMGEQLRLVKSQLQGLSASAGLLEQMRHMETQAKDLRNQLLNYRSAISNHGSKIEGLERELTDLNQEFETLQEKAQVNSRKAQTLNNNVNRATQSAKELDVKIKNVIRNVHILLKQISGTDGEGNNVPSGDFSREWAEAQRMMRELRNRNFGKHLREAEADKRESQLLLNRIRTWQKTHQGENNGLANSIRDSLNEYEAKLSDLRARLQEAAAQAKQANGLNQENERALGAIQRQVKEINSLQSDFTKYLTTADSSLLQTNIALQLMEKSQKEYEKLAASLNEARQELSDKVRELSRSAGKTSLVEEAEKHARSLQELAKQLEEIKRNASGDELVRCAVDAATAYENILNAIKAAEDAANRAASASESALQTVIKEDLPRKAKTLSSNSDKLLNEAKMTQKKLKQEVSPALNNLQQTLNIVTVQKEVIDTNLTTLRDGLHGIQRGDIDAMISSAKSMVRKANDITDEVLDGLNPIQTDVERIKDTYGRTQNEDFKKALTDADNSVNKLTNKLPDLWRKIESINQQLLPLGNISDNMDRIRELIQQARDAASKVAVPMRFNGKSGVEVRLPNDLEDLKGYTSLSLFLQRPNSRENGGTENMFVMYLGNKDASRDYIGMAVVDGQLTCVYNLGDREAELQVDQILTKSETKEAVMDRVKFQRIYQFARLNYTKGATSSKPETPGVYDMDGRNSNTLLNLDPENVVFYVGGYPPDFKLPSRLSFPPYKGCIELDDLNENVLSLYNFKKTFNLNTTEVEPCRRRKEESDKNYFEGTGYARVPTQPHAPIPTFGQTIQTTVDRGLLFFAENGDRFISLNIEDGKLMVRYKLNSELPKERGVGDAINNGRDHSIQIKIGKLQKRMWINVDVQNTIIDGEVFDFSTYYLGGIPIAIRERFNISTPAFRGCMKNLKKTSGVVRLNDTVGVTKKCSEDWKLVRSASFSRGGQLSFTDLGLPPTDHLQASFGFQTFQPSGILLDHQTWTRNLQVTLEDGYIELSTSDSGGPIFKSPQTYMDGLLHYVSVISDNSGLRLLIDDQLLRNSKRLKHISSSRQSLRLGGSNFEGCISNVFVQRLSLSPEVLDLTSNSLKRDVSLGGCSLNKPPFLMLLKGSTRFNKTKTFRINQLLQDTPVASPRSVKVWQDACSPLPKTQANHGALQFGDIPTSHLLFKLPQELLKPRSQFAVDMQTTSSRGLVFHTGTKNSFMALYLSKGRLVFALGTDGKKLRIKSKEKCNDGKWHTVVFGHDGEKGRLVVDGLRAREGSLPGNSTISIRAPVYLGSPPSGKPKSLPTNSFVGCLKNFQLDSKPLYTPSSSFGVSSCLGGPLEKGIYFSEEGGHVVLAHSVLLGPEFKLVFSIRPRSLTGILIHIGSQPGKHLCVYLEAGKVTASMDSGAGGTSTSVTPKQSLCDGQWHSVAVTIKQHILHLELDTDSSYTAGQIPFPPASTQEPLHLGGAPANLTTLRIPVWKSFFGCLRNIHVNHIPVPVTEALEVQGPVSLNGCPDQ.

A signal peptide spans 1 to 35 (MAAAARPRGRALGPVLPPTPLLLLVLRVLPACGAT). In terms of domain architecture, Laminin N-terminal spans 43-298 (AGLSLHPTYF…SIKDISIGGQ (256 aa)). Asn142 and Asn242 each carry an N-linked (GlcNAc...) asparagine glycan. The tract at residues 298 to 728 (QCVCNGHAEV…NNYYFPDLHH (431 aa)) is domain V. 29 disulfides stabilise this stretch: Cys299/Cys308, Cys301/Cys319, Cys321/Cys330, Cys333/Cys353, Cys356/Cys365, Cys358/Cys390, Cys393/Cys402, Cys405/Cys423, Cys426/Cys436, Cys428/Cys443, Cys445/Cys454, Cys457/Cys467, Cys491/Cys503, Cys493/Cys509, Cys511/Cys520, Cys523/Cys533, Cys536/Cys548, Cys538/Cys555, Cys557/Cys566, Cys569/Cys586, Cys601/Cys610, Cys613/Cys628, Cys631/Cys645, Cys633/Cys652, Cys654/Cys663, Cys666/Cys681, Cys684/Cys696, Cys686/Cys703, and Cys705/Cys714. Laminin EGF-like domains lie at 299–355 (CVCN…ECEA), 356–425 (CNCH…GCIP), 426–469 (CSCD…FCLR), 491–535 (CDCN…ICQA), 536–588 (CWCS…ACDP), 590–630 (GTIN…GCSE), 631–683 (CKCH…GCQG), and 684–728 (CQCD…DLHH). The domain IV 1 (domain IV B) stretch occupies residues 796–1265 (TEAVSGHITI…VAFYHKGALP (470 aa)). Intrachain disulfides connect Cys1266–Cys1278, Cys1268–Cys1285, Cys1287–Cys1296, Cys1299–Cys1309, Cys1312–Cys1319, Cys1314–Cys1326, Cys1328–Cys1337, Cys1340–Cys1353, Cys1356–Cys1371, Cys1358–Cys1378, Cys1380–Cys1389, Cys1392–Cys1402, Cys1405–Cys1417, Cys1407–Cys1424, Cys1426–Cys1435, and Cys1438–Cys1453. Laminin EGF-like domains lie at 1266–1311 (CECH…RCKP), 1312–1355 (CSCG…GCEG), 1356–1404 (CNCS…ECVP), and 1405–1455 (CNCN…GCTS). Residues 1266 to 1465 (CECHPTGATG…CFCFGVNNQC (200 aa)) form a domain III B region. Residues 1476–1653 (VDMLGWHLET…SGRIALAVEI (178 aa)) form the Laminin IV type A domain. Residues 1654-1821 (CACPPAYAGD…DSSPAEECDD (168 aa)) are domain III A. Intrachain disulfides connect Cys1687-Cys1696, Cys1689-Cys1703, Cys1706-Cys1715, Cys1718-Cys1731, Cys1734-Cys1746, Cys1736-Cys1755, Cys1757-Cys1766, and Cys1769-Cys1784. 2 consecutive Laminin EGF-like domains span residues 1687–1733 (CNCN…SCRA) and 1734–1786 (CPCP…SCQP). The Laminin EGF-like 15; truncated domain occupies 1787–1821 (CSCNSNGQLGSCHPLTGDCINQEPKDSSPAEECDD). Positions 1822–2389 (CDSCVMTLLN…ARDAASKVAV (568 aa)) are domain II and I. 2 coiled-coil regions span residues 1852 to 1941 (ASAG…KNVI) and 1987 to 2169 (KHLR…DELV). Positions 2278–2280 (RGD) match the Cell attachment site motif. Residues 2322–2388 (RTQNEDFKKA…QARDAASKVA (67 aa)) are a coiled coil. 3 N-linked (GlcNAc...) asparagine glycosylation sites follow: Asn2365, Asn2502, and Asn2584. Laminin G-like domains follow at residues 2390 to 2591 (PMRF…VEPC), 2598 to 2760 (SDKN…TKKC), 2767 to 2927 (VRSA…LGGC), 2986 to 3150 (ALQF…VSSC), and 3157 to 3330 (KGIY…LNGC). 5 cysteine pairs are disulfide-bonded: Cys2561-Cys2591, Cys2737-Cys2760, Cys2895-Cys2927, Cys3127-Cys3150, and Cys3302-Cys3330.

In terms of assembly, laminin is a complex glycoprotein, consisting of three different polypeptide chains (alpha, beta, gamma), which are bound to each other by disulfide bonds into a cross-shaped molecule comprising one long and three short arms with globules at each end. Alpha-3 is a subunit of laminin-5 (laminin-332 or epiligrin/kalinin/nicein), laminin-6 (laminin-311 or K-laminin) and laminin-7 (laminin-321 or KS-laminin). Skin; respiratory, urinary, and digestive epithelia and in other specialized tissues with prominent secretory or protective functions. Epithelial basement membrane, and epithelial cell tongue that migrates into a wound bed. A differential and focal expression of the subunit alpha-3 is observed in the CNS.

It localises to the secreted. It is found in the extracellular space. Its subcellular location is the extracellular matrix. The protein resides in the basement membrane. Its function is as follows. Binding to cells via a high affinity receptor, laminin is thought to mediate the attachment, migration and organization of cells into tissues during embryonic development by interacting with other extracellular matrix components. Laminin-5 is thought to be involved in (1) cell adhesion via integrin alpha-3/beta-1 in focal adhesion and integrin alpha-6/beta-4 in hemidesmosomes, (2) signal transduction via tyrosine phosphorylation of pp125-FAK and p80, (3) differentiation of keratinocytes. This chain is Laminin subunit alpha-3 (LAMA3), found in Homo sapiens (Human).